We begin with the raw amino-acid sequence, 227 residues long: NAD(P)H-quinone oxidoreductase subunit K, chloroplastic (227 aa).

Positions 43, 44, 108, and 139 each coordinate [4Fe-4S] cluster.

The protein belongs to the complex I 20 kDa subunit family. As to quaternary structure, NDH is composed of at least 16 different subunits, 5 of which are encoded in the nucleus. [4Fe-4S] cluster is required as a cofactor.

It localises to the plastid. The protein resides in the chloroplast thylakoid membrane. The enzyme catalyses a plastoquinone + NADH + (n+1) H(+)(in) = a plastoquinol + NAD(+) + n H(+)(out). It catalyses the reaction a plastoquinone + NADPH + (n+1) H(+)(in) = a plastoquinol + NADP(+) + n H(+)(out). NDH shuttles electrons from NAD(P)H:plastoquinone, via FMN and iron-sulfur (Fe-S) centers, to quinones in the photosynthetic chain and possibly in a chloroplast respiratory chain. The immediate electron acceptor for the enzyme in this species is believed to be plastoquinone. Couples the redox reaction to proton translocation, and thus conserves the redox energy in a proton gradient. The sequence is that of NAD(P)H-quinone oxidoreductase subunit K, chloroplastic from Drimys granadensis.